Reading from the N-terminus, the 60-residue chain is Large ribosomal subunit protein bL32 (60 aa).

The tract at residues 1 to 44 (MAVQQNKKSRSARDMRRSHDALSENALSVEKTTGEVHLRHHVSP) is disordered. The span at 11-22 (SARDMRRSHDAL) shows a compositional bias: basic and acidic residues.

The protein belongs to the bacterial ribosomal protein bL32 family.

This chain is Large ribosomal subunit protein bL32, found in Pseudomonas putida (strain W619).